Reading from the N-terminus, the 676-residue chain is Kojibiose hydrolase (676 aa).

The first 20 residues, 1–20, serve as a signal peptide directing secretion; that stretch reads MNKGIIQLLALSLFCISVKA. The Proton donor role is filled by Glu469. Glu613 acts as the Proton acceptor in catalysis.

It belongs to the glycosyl hydrolase 65 family.

The enzyme catalyses kojibiose + H2O = beta-D-glucose + D-glucose. Glycosidase that specifically hydrolyzes kojibiose to beta-glucose and glucose. Besides its activity on kojibiose, is also able to act on alpha-1,2-oligoglucans with a higher degree of polymerization. Shows weak activity on nigerose, but is not capable of breaking down trehalose, maltose, isomaltose, sucrose, isomaltulose, turanose or melezitose. This is Kojibiose hydrolase from Mucilaginibacter mallensis.